Reading from the N-terminus, the 101-residue chain is Small ribosomal subunit protein uS14 (101 aa).

It belongs to the universal ribosomal protein uS14 family. In terms of assembly, part of the 30S ribosomal subunit. Contacts proteins S3 and S10.

Functionally, binds 16S rRNA, required for the assembly of 30S particles and may also be responsible for determining the conformation of the 16S rRNA at the A site. The polypeptide is Small ribosomal subunit protein uS14 (Phenylobacterium zucineum (strain HLK1)).